The following is a 418-amino-acid chain: Tyrosine--tRNA ligase (418 aa).

Tyr38 provides a ligand contact to L-tyrosine. Residues 43–52 (CTARSLHIGS) carry the 'HIGH' region motif. L-tyrosine contacts are provided by Tyr175 and Gln179. The 'KMSKS' region motif lies at 235–239 (KMGKT). Lys238 is a binding site for ATP. Residues 348 to 413 (LSVVKLLQVS…CGKKRHLKVV (66 aa)) enclose the S4 RNA-binding domain.

The protein belongs to the class-I aminoacyl-tRNA synthetase family. TyrS type 1 subfamily. Homodimer.

It localises to the cytoplasm. The catalysed reaction is tRNA(Tyr) + L-tyrosine + ATP = L-tyrosyl-tRNA(Tyr) + AMP + diphosphate + H(+). Functionally, catalyzes the attachment of tyrosine to tRNA(Tyr) in a two-step reaction: tyrosine is first activated by ATP to form Tyr-AMP and then transferred to the acceptor end of tRNA(Tyr). The protein is Tyrosine--tRNA ligase of Ehrlichia ruminantium (strain Gardel).